Reading from the N-terminus, the 193-residue chain is Putative manganese efflux pump MntP (193 aa).

6 helical membrane-spanning segments follow: residues 3 to 23 (MYAT…ASIC), 41 to 61 (LIFG…GLYA), 65 to 85 (IIEW…CRMI), 106 to 126 (IVLI…GIGL), 133 to 153 (IVHT…LGML), and 169 to 189 (IGGL…LELF).

It belongs to the MntP (TC 9.B.29) family.

Its subcellular location is the cell inner membrane. Probably functions as a manganese efflux pump. This chain is Putative manganese efflux pump MntP, found in Photorhabdus laumondii subsp. laumondii (strain DSM 15139 / CIP 105565 / TT01) (Photorhabdus luminescens subsp. laumondii).